Here is a 465-residue protein sequence, read N- to C-terminus: SHC-transforming protein 1 (465 aa).

The PID domain maps to M44–E227. Residues E228–P369 are CH1. The disordered stretch occupies residues V281–F315. In terms of domain architecture, SH2 spans W370–V461.

As to quaternary structure, interacts with grb2. As to expression, highly expressed in oocytes and embryo. Also expressed in liver. Detected in ovary, testis and heart and to a lesser extent in liver (at protein level).

The protein resides in the cytoplasm. In terms of biological role, implicated in ras-dependent oocyte maturation induced by insulin/IGF1. This Xenopus laevis (African clawed frog) protein is SHC-transforming protein 1 (shc1).